The sequence spans 274 residues: Exosome complex component Rrp42 (274 aa).

This sequence belongs to the RNase PH family. Rrp42 subfamily. In terms of assembly, component of the archaeal exosome complex. Forms a hexameric ring-like arrangement composed of 3 Rrp41-Rrp42 heterodimers. The hexameric ring associates with a trimer of Rrp4 and/or Csl4 subunits.

The protein resides in the cytoplasm. In terms of biological role, non-catalytic component of the exosome, which is a complex involved in RNA degradation. Contributes to the structuring of the Rrp41 active site. The polypeptide is Exosome complex component Rrp42 (Pyrococcus horikoshii (strain ATCC 700860 / DSM 12428 / JCM 9974 / NBRC 100139 / OT-3)).